Here is a 518-residue protein sequence, read N- to C-terminus: Gypsy retrotransposon integrase-like protein 1 (518 aa).

Positions 135 to 293 (VVGNPWSVVT…PYFQMFNRNP (159 aa)) constitute an Integrase catalytic domain. The segment at 326–348 (NQTPAAGQMESSTSEELSKSKVA) is disordered. Ser-498 is subject to Phosphoserine.

This chain is Gypsy retrotransposon integrase-like protein 1 (GIN1), found in Rattus norvegicus (Rat).